Consider the following 448-residue polypeptide: Trigger factor (448 aa).

The PPIase FKBP-type domain occupies 173–258 (SDRVTIDFVG…LKQIEWAHMP (86 aa)).

Belongs to the FKBP-type PPIase family. Tig subfamily.

It is found in the cytoplasm. The enzyme catalyses [protein]-peptidylproline (omega=180) = [protein]-peptidylproline (omega=0). Its function is as follows. Involved in protein export. Acts as a chaperone by maintaining the newly synthesized protein in an open conformation. Functions as a peptidyl-prolyl cis-trans isomerase. This is Trigger factor from Herminiimonas arsenicoxydans.